Reading from the N-terminus, the 101-residue chain is Small ribosomal subunit protein uS14 (101 aa).

It belongs to the universal ribosomal protein uS14 family. In terms of assembly, part of the 30S ribosomal subunit. Contacts proteins S3 and S10.

In terms of biological role, binds 16S rRNA, required for the assembly of 30S particles and may also be responsible for determining the conformation of the 16S rRNA at the A site. The protein is Small ribosomal subunit protein uS14 of Chromobacterium violaceum (strain ATCC 12472 / DSM 30191 / JCM 1249 / CCUG 213 / NBRC 12614 / NCIMB 9131 / NCTC 9757 / MK).